A 172-amino-acid chain; its full sequence is Bifunctional protein PyrR (172 aa).

Substrate-binding positions include Thr-36 to Gly-37, Arg-77, Asp-94 to Thr-102, and Val-151. Positions Leu-90 to Thr-102 match the PRPP-binding motif.

The protein belongs to the purine/pyrimidine phosphoribosyltransferase family. PyrR subfamily.

The enzyme catalyses UMP + diphosphate = 5-phospho-alpha-D-ribose 1-diphosphate + uracil. Its function is as follows. Regulates the transcription of the pyrimidine nucleotide (pyr) operon in response to exogenous pyrimidines. In terms of biological role, also displays a weak uracil phosphoribosyltransferase activity which is not physiologically significant. The chain is Bifunctional protein PyrR from Pseudomonas putida (Arthrobacter siderocapsulatus).